The primary structure comprises 126 residues: Histone H2B (126 aa).

The span at 1–12 shows a compositional bias: low complexity; that stretch reads MPEPAKSAPAPK. Residues 1–36 form a disordered region; it reads MPEPAKSAPAPKKGSKKAVTKTQKKGDKKRKKSRKE. 2 positions are modified to N6-acetyllysine: Lys-6 and Lys-13. Over residues 13–34 the composition is skewed to basic residues; sequence KGSKKAVTKTQKKGDKKRKKSR. At Ser-15 the chain carries Phosphoserine. 2 positions are modified to N6-acetyllysine: Lys-16 and Lys-21. A Glycyl lysine isopeptide (Lys-Gly) (interchain with G-Cter in ubiquitin) cross-link involves residue Lys-121.

Belongs to the histone H2B family. In terms of assembly, the nucleosome is a histone octamer containing two molecules each of H2A, H2B, H3 and H4 assembled in one H3-H4 heterotetramer and two H2A-H2B heterodimers. The octamer wraps approximately 147 bp of DNA. Post-translationally, monoubiquitination of Lys-121 by the RNF20/40 complex gives a specific tag for epigenetic transcriptional activation and is also prerequisite for histone H3 'Lys-4' and 'Lys-79' methylation. Phosphorylated on Ser-15 during apoptosis; which facilitates apoptotic chromatin condensation.

Its subcellular location is the nucleus. The protein localises to the chromosome. Functionally, core component of nucleosome. Nucleosomes wrap and compact DNA into chromatin, limiting DNA accessibility to the cellular machineries which require DNA as a template. Histones thereby play a central role in transcription regulation, DNA repair, DNA replication and chromosomal stability. DNA accessibility is regulated via a complex set of post-translational modifications of histones, also called histone code, and nucleosome remodeling. The polypeptide is Histone H2B (Cairina moschata (Muscovy duck)).